The sequence spans 218 residues: Hypoxanthine-guanine phosphoribosyltransferase (218 aa).

GMP-binding positions include K69, 134–142 (EDIIDTGKT), K166, 186–188 (KFV), and D194. D138 (proton acceptor) is an active-site residue. D194 contacts Mg(2+).

It belongs to the purine/pyrimidine phosphoribosyltransferase family. Homotetramer. It depends on Mg(2+) as a cofactor.

The protein localises to the cytoplasm. The enzyme catalyses IMP + diphosphate = hypoxanthine + 5-phospho-alpha-D-ribose 1-diphosphate. It catalyses the reaction GMP + diphosphate = guanine + 5-phospho-alpha-D-ribose 1-diphosphate. It participates in purine metabolism; IMP biosynthesis via salvage pathway; IMP from hypoxanthine: step 1/1. Its function is as follows. Converts guanine to guanosine monophosphate, and hypoxanthine to inosine monophosphate. Transfers the 5-phosphoribosyl group from 5-phosphoribosylpyrophosphate onto the purine. Plays a central role in the generation of purine nucleotides through the purine salvage pathway. In Gallus gallus (Chicken), this protein is Hypoxanthine-guanine phosphoribosyltransferase (HPRT1).